A 176-amino-acid polypeptide reads, in one-letter code: Shikimate kinase (176 aa).

Gly14–Thr19 is an ATP binding site. Position 18 (Ser18) interacts with Mg(2+). Asp36, Arg60, and Gly83 together coordinate substrate. Arg121 contributes to the ATP binding site. Arg140 contributes to the substrate binding site.

The protein belongs to the shikimate kinase family. Monomer. Mg(2+) is required as a cofactor.

It localises to the cytoplasm. The enzyme catalyses shikimate + ATP = 3-phosphoshikimate + ADP + H(+). It participates in metabolic intermediate biosynthesis; chorismate biosynthesis; chorismate from D-erythrose 4-phosphate and phosphoenolpyruvate: step 5/7. In terms of biological role, catalyzes the specific phosphorylation of the 3-hydroxyl group of shikimic acid using ATP as a cosubstrate. This is Shikimate kinase from Francisella tularensis subsp. holarctica (strain FTNF002-00 / FTA).